The chain runs to 393 residues: Riboflavin biosynthesis protein RibBA (393 aa).

The DHBP synthase stretch occupies residues 1 to 200 (MQFDNIDSAL…IDDLIEYRKK (200 aa)). D-ribulose 5-phosphate contacts are provided by residues 27–28 (RE), Asp-32, 139–143 (RNGHT), and Glu-163. Residue Glu-28 participates in Mg(2+) binding. His-142 contacts Mg(2+). Residues 201-393 (LEPEIEFKAK…TKKIKMGHLI (193 aa)) are GTP cyclohydrolase II. A GTP-binding site is contributed by 249 to 253 (RLHSA). Zn(2+) is bound by residues Cys-254, Cys-265, and Cys-267. GTP is bound by residues Gln-270, 291 to 293 (EGR), and Thr-313. The Proton acceptor; for GTP cyclohydrolase activity role is filled by Asp-325. The active-site Nucleophile; for GTP cyclohydrolase activity is Arg-327. GTP is bound by residues Ser-348 and Lys-353.

This sequence in the N-terminal section; belongs to the DHBP synthase family. The protein in the C-terminal section; belongs to the GTP cyclohydrolase II family. The cofactor is Mg(2+). Mn(2+) serves as cofactor. Requires Zn(2+) as cofactor.

The catalysed reaction is D-ribulose 5-phosphate = (2S)-2-hydroxy-3-oxobutyl phosphate + formate + H(+). It carries out the reaction GTP + 4 H2O = 2,5-diamino-6-hydroxy-4-(5-phosphoribosylamino)-pyrimidine + formate + 2 phosphate + 3 H(+). Its pathway is cofactor biosynthesis; riboflavin biosynthesis; 2-hydroxy-3-oxobutyl phosphate from D-ribulose 5-phosphate: step 1/1. The protein operates within cofactor biosynthesis; riboflavin biosynthesis; 5-amino-6-(D-ribitylamino)uracil from GTP: step 1/4. Catalyzes the conversion of D-ribulose 5-phosphate to formate and 3,4-dihydroxy-2-butanone 4-phosphate. Its function is as follows. Catalyzes the conversion of GTP to 2,5-diamino-6-ribosylamino-4(3H)-pyrimidinone 5'-phosphate (DARP), formate and pyrophosphate. This chain is Riboflavin biosynthesis protein RibBA, found in Staphylococcus aureus (strain Mu50 / ATCC 700699).